The sequence spans 418 residues: Serine hydroxymethyltransferase (418 aa).

(6S)-5,6,7,8-tetrahydrofolate contacts are provided by residues leucine 121 and glycine 125 to leucine 127. Lysine 230 carries the N6-(pyridoxal phosphate)lysine modification. Residue serine 356–phenylalanine 358 coordinates (6S)-5,6,7,8-tetrahydrofolate.

This sequence belongs to the SHMT family. Homodimer. Requires pyridoxal 5'-phosphate as cofactor.

Its subcellular location is the cytoplasm. It carries out the reaction (6R)-5,10-methylene-5,6,7,8-tetrahydrofolate + glycine + H2O = (6S)-5,6,7,8-tetrahydrofolate + L-serine. The protein operates within one-carbon metabolism; tetrahydrofolate interconversion. It functions in the pathway amino-acid biosynthesis; glycine biosynthesis; glycine from L-serine: step 1/1. In terms of biological role, catalyzes the reversible interconversion of serine and glycine with tetrahydrofolate (THF) serving as the one-carbon carrier. This reaction serves as the major source of one-carbon groups required for the biosynthesis of purines, thymidylate, methionine, and other important biomolecules. Also exhibits THF-independent aldolase activity toward beta-hydroxyamino acids, producing glycine and aldehydes, via a retro-aldol mechanism. The protein is Serine hydroxymethyltransferase of Pseudoalteromonas atlantica (strain T6c / ATCC BAA-1087).